The following is a 210-amino-acid chain: NADH dehydrogenase [ubiquinone] iron-sulfur protein 8, mitochondrial (210 aa).

The transit peptide at 1–34 (MRCLTTPMLLRALAQAARAGPPGGRSLHSSAVAA) directs the protein to the mitochondrion. 4Fe-4S ferredoxin-type domains lie at 102-131 (RRYP…IEAE) and 141-170 (TRYD…EGPN). Residues Cys-111, Cys-114, Cys-117, Cys-121, Cys-150, Cys-153, Cys-156, and Cys-160 each contribute to the [4Fe-4S] cluster site.

Belongs to the complex I 23 kDa subunit family. In terms of assembly, core subunit of respiratory chain NADH dehydrogenase (Complex I) which is composed of 45 different subunits. This is a component of the iron-sulfur (IP) fragment of the enzyme. Interacts with RAB5IF. Requires [4Fe-4S] cluster as cofactor. Expressed in all tissues with the highest level in heart and skeletal muscle and the lowest level in lung.

The protein resides in the mitochondrion inner membrane. It carries out the reaction a ubiquinone + NADH + 5 H(+)(in) = a ubiquinol + NAD(+) + 4 H(+)(out). Core subunit of the mitochondrial membrane respiratory chain NADH dehydrogenase (Complex I) which catalyzes electron transfer from NADH through the respiratory chain, using ubiquinone as an electron acceptor. Essential for the catalytic activity and assembly of complex I. This is NADH dehydrogenase [ubiquinone] iron-sulfur protein 8, mitochondrial (NDUFS8) from Homo sapiens (Human).